The primary structure comprises 307 residues: 4-hydroxythreonine-4-phosphate dehydrogenase (307 aa).

Substrate contacts are provided by His-126 and Thr-127. Residues His-156, His-195, and His-251 each contribute to the a divalent metal cation site. Positions 259, 268, and 277 each coordinate substrate.

The protein belongs to the PdxA family. In terms of assembly, homodimer. The cofactor is Zn(2+). Mg(2+) serves as cofactor. It depends on Co(2+) as a cofactor.

It is found in the cytoplasm. It catalyses the reaction 4-(phosphooxy)-L-threonine + NAD(+) = 3-amino-2-oxopropyl phosphate + CO2 + NADH. Its pathway is cofactor biosynthesis; pyridoxine 5'-phosphate biosynthesis; pyridoxine 5'-phosphate from D-erythrose 4-phosphate: step 4/5. Functionally, catalyzes the NAD(P)-dependent oxidation of 4-(phosphooxy)-L-threonine (HTP) into 2-amino-3-oxo-4-(phosphooxy)butyric acid which spontaneously decarboxylates to form 3-amino-2-oxopropyl phosphate (AHAP). The chain is 4-hydroxythreonine-4-phosphate dehydrogenase from Helicobacter pylori (strain Shi470).